The chain runs to 270 residues: MRGQGRKESLSDSRDLDGSYDQLTGHPPGPTKKALKQRFLKLLPCCGPQALPSVSETLAVPASLRPHRPRPLDPDSVEDEFELSTVCHRPEGLEQLQEQTKFTRKELQVLYRGFKNECPSGIVNEENFKQIYSQFFPQGDSSTYATFLFNAFDTNHDGSVSFEDFVAGLSVILRGTIDDRLNWAFNLYDLNKDGCITKEEMLDIMKSIYDMMGKYTYPALREEAPREHVESFFQKMDRNKDGVVTIEEFIESCQKDENIMRSMQLFDNVI.

The segment covering 1-17 (MRGQGRKESLSDSRDLD) has biased composition (basic and acidic residues). The segment at 1-33 (MRGQGRKESLSDSRDLDGSYDQLTGHPPGPTKK) is disordered. S9 carries the post-translational modification Phosphoserine. 2 S-palmitoyl cysteine lipidation sites follow: C45 and C46. Positions 81-137 (FELSTVCHRPEGLEQLQEQTKFTRKELQVLYRGFKNECPSGIVNEENFKQIYSQFFP) constitute an EF-hand 1; degenerate domain. EF-hand domains follow at residues 140 to 175 (DSSTYATFLFNAFDTNHDGSVSFEDFVAGLSVILRG), 176 to 211 (TIDDRLNWAFNLYDLNKDGCITKEEMLDIMKSIYDM), and 224 to 259 (APREHVESFFQKMDRNKDGVVTIEEFIESCQKDENI). Positions 153, 155, 157, 159, 164, 189, 191, 193, 195, 200, 237, 239, 241, and 248 each coordinate Ca(2+). The tract at residues 257 to 270 (ENIMRSMQLFDNVI) is interaction with KCND2.

This sequence belongs to the recoverin family. As to quaternary structure, component of heteromultimeric potassium channels. Identified in potassium channel complexes containing KCND1, KCND2, KCND3, KCNIP1, KCNIP2, KCNIP3, KCNIP4, DPP6 and DPP10. The KCND2-KCNIP2 channel complex contains four KCND2 and four KCNIP2 subunits. Interacts with KCND2. Probably part of a complex consisting of KCNIP1, KCNIP2 isoform 3 and KCND2. At least isoform 2 and isoform 3 can self-associate to form homodimers and homotetramers. Isoform 3 interacts with KCNIP1 in a calcium-dependent manner. Interacts with KCND3; each KCNIP2 monomer interacts with two adjacent KCND3 subunits, through both the N-terminal inactivation ball of a KCND3 subunit and a C-terminal helix from the adjacent KCND3 subunit, clamping them together; this interaction modulates the channel gating kinetics. Palmitoylated. Palmitoylation enhances association with the plasma membrane. In terms of tissue distribution, expressed in heart ventricle with isoform 1 as most prominent form.

The protein localises to the cell membrane. Regulatory subunit of Kv4/D (Shal)-type voltage-gated rapidly inactivating A-type potassium channels. Modulates channel density, inactivation kinetics and rate of recovery from inactivation in a calcium-dependent and isoform-specific manner. Involved in KCND2 and KCND3 trafficking to the cell surface. May be required for the expression of I(To) currents in the heart. The sequence is that of A-type potassium channel modulatory protein KCNIP2 from Mustela putorius furo (European domestic ferret).